Consider the following 231-residue polypeptide: Ribosomal RNA large subunit methyltransferase E (231 aa).

The S-adenosyl-L-methionine site is built by Gly76, Trp78, Asp99, Asp115, and Asp139. Lys179 acts as the Proton acceptor in catalysis.

It belongs to the class I-like SAM-binding methyltransferase superfamily. RNA methyltransferase RlmE family.

It is found in the cytoplasm. The catalysed reaction is uridine(2552) in 23S rRNA + S-adenosyl-L-methionine = 2'-O-methyluridine(2552) in 23S rRNA + S-adenosyl-L-homocysteine + H(+). Specifically methylates the uridine in position 2552 of 23S rRNA at the 2'-O position of the ribose in the fully assembled 50S ribosomal subunit. In Bradyrhizobium sp. (strain BTAi1 / ATCC BAA-1182), this protein is Ribosomal RNA large subunit methyltransferase E.